A 124-amino-acid polypeptide reads, in one-letter code: Protein S100-A16 (124 aa).

The region spanning 23–37 is the EF-hand 1; degenerate domain; it reads VSKHSLVKNKISKSS. Positions 54 to 89 constitute an EF-hand 2 domain; the sequence is GNRKAADKLIQNLDANHDGRICFDEYWTMIGGITSP. Ca(2+)-binding residues include aspartate 67, asparagine 69, aspartate 71, arginine 73, and glutamate 78. Residues 97 to 124 form a disordered region; it reads QECQQESQQECQQESQQESQQESQQGSS.

Belongs to the S-100 family. In terms of assembly, homodimer. Interacts with TP53. As to expression, ubiquitous. Widely distributed throughout the adult brain and predominantly expressed within specific astrocyte populations. Expressed at high level in adipose tissues of obese animals.

It is found in the nucleus. It localises to the nucleolus. The protein localises to the cytoplasm. Calcium-binding protein. Binds one calcium ion per monomer. Can promote differentiation of adipocytes (in vitro). Overexpression in 3T3-L1 preadipocytes increases their proliferation, enhances adipogenesis and reduces insulin-stimulated glucose uptake. This is Protein S100-A16 from Mus musculus (Mouse).